The sequence spans 132 residues: MVQDTISDLFIRLKNASHARLERVEGIPYGKYQEEILKVLVREGYIKGYEIEEKEGKKYLSVQLKFGPGKQPVLNEVRLISVPSRRIYAKKNDIPKVMNGLGIAILTTSAGVLSDAEARQKGVGGQIICYVW.

It belongs to the universal ribosomal protein uS8 family. In terms of assembly, part of the 30S ribosomal subunit. Contacts proteins S5 and S12.

In terms of biological role, one of the primary rRNA binding proteins, it binds directly to 16S rRNA central domain where it helps coordinate assembly of the platform of the 30S subunit. The sequence is that of Small ribosomal subunit protein uS8 from Coprothermobacter proteolyticus (strain ATCC 35245 / DSM 5265 / OCM 4 / BT).